Reading from the N-terminus, the 65-residue chain is UPF0337 protein BCE_1081 (65 aa).

The interval 1–28 (MSGGLKEQITGKVEKTKGQVKEGIGEVT) is disordered. Residues 12–28 (KVEKTKGQVKEGIGEVT) show a composition bias toward basic and acidic residues.

This sequence belongs to the UPF0337 (CsbD) family.

This chain is UPF0337 protein BCE_1081, found in Bacillus cereus (strain ATCC 10987 / NRS 248).